We begin with the raw amino-acid sequence, 60 residues long: Large ribosomal subunit protein uL30 (60 aa).

The protein belongs to the universal ribosomal protein uL30 family. As to quaternary structure, part of the 50S ribosomal subunit.

In Shewanella sp. (strain MR-7), this protein is Large ribosomal subunit protein uL30.